Consider the following 428-residue polypeptide: MRVVILGSGVVGVASAYYLARAGHEVTVIDREAGPALDTSFANAGQISPGYAAPWAAPGVPLKAVKWMFEKHAPLAIRLDGTRFQLQWMWQMLRNCTPERYAVNKGRMVRLAEYSRDCLQALRADTGIEYEGRTGGTLQLFRSQQQLDGAAKDIAVLREANVPFELLSPAELKNAEPALAAVSHKLTGGLRLPGDETGDCQLFTTRLAALAESLGVKFRYNTPIDALAIAGGKIAGVQCGSETVRADAYVVALGSYSTNFVSKLMKIPVYPLKGYSITAPIVNEAAAPVSTVLDETYKIAITRFDQRIRVGGMAEIVGFDKKLRAARRETLEMCVNDLFPGGGDTSKATFWTGLRPMTPDGTPIVGRTPVSNLFMNTGHGTLGWTMSCGSGQLLADLISGKKPAIQADDLSVHRYLNEVAGQTRPAYA.

3-17 (VVILGSGVVGVASAY) is an FAD binding site.

It belongs to the DadA oxidoreductase family. FAD serves as cofactor.

It catalyses the reaction a D-alpha-amino acid + A + H2O = a 2-oxocarboxylate + AH2 + NH4(+). Its pathway is amino-acid degradation; D-alanine degradation; NH(3) and pyruvate from D-alanine: step 1/1. Its function is as follows. Oxidative deamination of D-amino acids. This Burkholderia vietnamiensis (strain G4 / LMG 22486) (Burkholderia cepacia (strain R1808)) protein is D-amino acid dehydrogenase.